Here is a 554-residue protein sequence, read N- to C-terminus: uncharacterized protein (554 aa).

This is an uncharacterized protein from Saccharomyces cerevisiae (strain ATCC 204508 / S288c) (Baker's yeast).